Reading from the N-terminus, the 291-residue chain is Malolactic fermentation system transcriptional activator (291 aa).

Residues 1 to 60 form the HTH lysR-type domain; the sequence is MSLNLRDLEYFYQLSKLRSFTNVAKHFRVSQPTISYAIKRLETYYDCDLFYKDSSHQVVD. A DNA-binding region (H-T-H motif) is located at residues 20-39; that stretch reads FTNVAKHFRVSQPTISYAIK.

It belongs to the LysR transcriptional regulatory family.

The protein resides in the cytoplasm. In terms of biological role, required for malolactic fermentation. It is most probably a transcriptional activator. The protein is Malolactic fermentation system transcriptional activator (mleR) of Lactococcus lactis subsp. lactis (strain IL1403) (Streptococcus lactis).